A 158-amino-acid polypeptide reads, in one-letter code: NAD(P)H-quinone oxidoreductase subunit N (158 aa).

This sequence belongs to the complex I NdhN subunit family. NDH-1 can be composed of about 15 different subunits; different subcomplexes with different compositions have been identified which probably have different functions.

It localises to the cellular thylakoid membrane. The enzyme catalyses a plastoquinone + NADH + (n+1) H(+)(in) = a plastoquinol + NAD(+) + n H(+)(out). It carries out the reaction a plastoquinone + NADPH + (n+1) H(+)(in) = a plastoquinol + NADP(+) + n H(+)(out). In terms of biological role, NDH-1 shuttles electrons from an unknown electron donor, via FMN and iron-sulfur (Fe-S) centers, to quinones in the respiratory and/or the photosynthetic chain. The immediate electron acceptor for the enzyme in this species is believed to be plastoquinone. Couples the redox reaction to proton translocation, and thus conserves the redox energy in a proton gradient. Cyanobacterial NDH-1 also plays a role in inorganic carbon-concentration. This chain is NAD(P)H-quinone oxidoreductase subunit N, found in Prochlorococcus marinus (strain MIT 9301).